We begin with the raw amino-acid sequence, 152 residues long: ASP external chaperone (152 aa).

Positions 1 to 22 are cleaved as a signal peptide; sequence MNKPVTLLLATLLAPLSGQLCA.

As to quaternary structure, forms a complex with the serine protease ASP in the periplasm. After translocation of the ASP-ORF2 complex from the periplasm to the extracellular space, the complex is dissociated in a pH-dependent manner.

It localises to the periplasm. Its subcellular location is the secreted. Degraded by ASP after secretion and dissociation of the ASP-ORF2 complex. Required for the production of the active form of the Aeromonas extracellular serine protease (ASP). Acts as a chaperone that helps ASP form an active structure in the periplasm. Formation of a complex with ASP in the periplasm also inactivates the protease activity and likely protects ASP from intrinsic proteases. Dissociation of the ASP-ORF2 complex after secretion in the extracellular space generates an active ASP. The chain is ASP external chaperone from Aeromonas sobria.